Reading from the N-terminus, the 249-residue chain is Benzil reductase ((S)-benzoin forming) (249 aa).

NADP(+)-binding residues include Ile6, Asn87, Tyr154, Lys158, Val189, and Thr191. Tyr154 functions as the Proton acceptor in the catalytic mechanism.

It belongs to the short-chain dehydrogenases/reductases (SDR) family.

It localises to the cytoplasm. The catalysed reaction is (S)-benzoin + NADP(+) = benzil + NADPH + H(+). It carries out the reaction 2-hydroxy-1-phenyl-1-propanone + NADP(+) = 1-phenyl-1,2-propanedione + NADPH + H(+). Its activity is regulated as follows. Inhibited by Cibacron blue 3GA, a general SDR family inhibitor. Functionally, reduces benzil stereospecifically to (S)-benzoin. Can also reduce 1-phenyl-1,2-propanedione, 1,4-naphthoquinone, 1-(4-methyl-phenyl)-2-phenyl-ethane-1,2-dione, 1-(4-fluoro-phenyl)-2-phenyl-ethane-1,2-dione, methyl benzoylformate and p-nitrobenzaldehyde in decreasing order. This Bacillus cereus protein is Benzil reductase ((S)-benzoin forming).